The following is a 59-amino-acid chain: Cytochrome c oxidase subunit 7 (59 aa).

Over 1–24 (MKNTIVQQQRFLQSIHKPTYLQRP) the chain is Mitochondrial matrix. The helical transmembrane segment at 25 to 47 (GSFALVYPYYAVMAGLGLYSLYA) threads the bilayer. Residues 48 to 59 (SGRVIFGKKDAF) are Mitochondrial intermembrane-facing.

It belongs to the cytochrome c oxidase subunit 7 family. In terms of assembly, component of the cytochrome c oxidase (complex IV, CIV), a multisubunit enzyme composed of a catalytic core of 3 subunits and several supernumerary subunits. The complex exists as a monomer or a dimer and forms supercomplexes (SCs) in the inner mitochondrial membrane with ubiquinol-cytochrome c oxidoreductase (cytochrome b-c1 complex, complex III, CIII).

The protein resides in the mitochondrion inner membrane. It functions in the pathway energy metabolism; oxidative phosphorylation. Component of the cytochrome c oxidase, the last enzyme in the mitochondrial electron transport chain which drives oxidative phosphorylation. The respiratory chain contains 3 multisubunit complexes succinate dehydrogenase (complex II, CII), ubiquinol-cytochrome c oxidoreductase (cytochrome b-c1 complex, complex III, CIII) and cytochrome c oxidase (complex IV, CIV), that cooperate to transfer electrons derived from NADH and succinate to molecular oxygen, creating an electrochemical gradient over the inner membrane that drives transmembrane transport and the ATP synthase. Cytochrome c oxidase is the component of the respiratory chain that catalyzes the reduction of oxygen to water. Electrons originating from reduced cytochrome c in the intermembrane space (IMS) are transferred via the dinuclear copper A center (CU(A)) of subunit 2 and heme A of subunit 1 to the active site in subunit 1, a binuclear center (BNC) formed by heme A3 and copper B (CU(B)). The BNC reduces molecular oxygen to 2 water molecules using 4 electrons from cytochrome c in the IMS and 4 protons from the mitochondrial matrix. This chain is Cytochrome c oxidase subunit 7 (cox7), found in Schizosaccharomyces pombe (strain 972 / ATCC 24843) (Fission yeast).